Reading from the N-terminus, the 620-residue chain is Dihydroxy-acid dehydratase (620 aa).

Asp-82 lines the Mg(2+) pocket. Cys-123 is a [2Fe-2S] cluster binding site. Mg(2+) is bound by residues Asp-124 and Lys-125. Lys-125 bears the N6-carboxylysine mark. Cys-197 serves as a coordination point for [2Fe-2S] cluster. Glu-493 contacts Mg(2+). Ser-519 serves as the catalytic Proton acceptor.

Belongs to the IlvD/Edd family. As to quaternary structure, homodimer. It depends on [2Fe-2S] cluster as a cofactor. Mg(2+) is required as a cofactor.

It catalyses the reaction (2R)-2,3-dihydroxy-3-methylbutanoate = 3-methyl-2-oxobutanoate + H2O. It carries out the reaction (2R,3R)-2,3-dihydroxy-3-methylpentanoate = (S)-3-methyl-2-oxopentanoate + H2O. It participates in amino-acid biosynthesis; L-isoleucine biosynthesis; L-isoleucine from 2-oxobutanoate: step 3/4. Its pathway is amino-acid biosynthesis; L-valine biosynthesis; L-valine from pyruvate: step 3/4. Its function is as follows. Functions in the biosynthesis of branched-chain amino acids. Catalyzes the dehydration of (2R,3R)-2,3-dihydroxy-3-methylpentanoate (2,3-dihydroxy-3-methylvalerate) into 2-oxo-3-methylpentanoate (2-oxo-3-methylvalerate) and of (2R)-2,3-dihydroxy-3-methylbutanoate (2,3-dihydroxyisovalerate) into 2-oxo-3-methylbutanoate (2-oxoisovalerate), the penultimate precursor to L-isoleucine and L-valine, respectively. In Bifidobacterium longum (strain NCC 2705), this protein is Dihydroxy-acid dehydratase.